The sequence spans 207 residues: MINYFELSLKNLGVSFTSESIDKLKFYIKRVLLFGSRFNLVSKNDLRFDAVLLHALDSVVGFPIIKDNNPHQVLDVGSGAGFPGIILAIFDNSRKYVLLERSNKKVTFLRMMSLELGLDNVKVLERDVADEKDKYEFITIRAFRDIREYASILRLILKNGGLIMAYKGRFDKIKFEISHIESLFSKIEIKESAISDAKERNFLLLYK.

Residues Gly77, Phe82, Glu100–Ser102, and Arg141 contribute to the S-adenosyl-L-methionine site.

This sequence belongs to the methyltransferase superfamily. RNA methyltransferase RsmG family.

It is found in the cytoplasm. Its function is as follows. Specifically methylates the N7 position of a guanine in 16S rRNA. The polypeptide is Ribosomal RNA small subunit methyltransferase G (Borrelia hermsii (strain HS1 / DAH)).